Here is a 688-residue protein sequence, read N- to C-terminus: Glycine--tRNA ligase beta subunit (688 aa).

This sequence belongs to the class-II aminoacyl-tRNA synthetase family. Tetramer of two alpha and two beta subunits.

The protein localises to the cytoplasm. The enzyme catalyses tRNA(Gly) + glycine + ATP = glycyl-tRNA(Gly) + AMP + diphosphate. The protein is Glycine--tRNA ligase beta subunit of Shewanella sp. (strain MR-7).